We begin with the raw amino-acid sequence, 363 residues long: UDP-N-acetylglucosamine--N-acetylmuramyl-(pentapeptide) pyrophosphoryl-undecaprenol N-acetylglucosamine transferase (363 aa).

UDP-N-acetyl-alpha-D-glucosamine-binding positions include 14–16 (TGG), arginine 171, serine 200, and glutamine 290.

The protein belongs to the glycosyltransferase 28 family. MurG subfamily.

The protein localises to the cell inner membrane. It catalyses the reaction di-trans,octa-cis-undecaprenyl diphospho-N-acetyl-alpha-D-muramoyl-L-alanyl-D-glutamyl-meso-2,6-diaminopimeloyl-D-alanyl-D-alanine + UDP-N-acetyl-alpha-D-glucosamine = di-trans,octa-cis-undecaprenyl diphospho-[N-acetyl-alpha-D-glucosaminyl-(1-&gt;4)]-N-acetyl-alpha-D-muramoyl-L-alanyl-D-glutamyl-meso-2,6-diaminopimeloyl-D-alanyl-D-alanine + UDP + H(+). It functions in the pathway cell wall biogenesis; peptidoglycan biosynthesis. Cell wall formation. Catalyzes the transfer of a GlcNAc subunit on undecaprenyl-pyrophosphoryl-MurNAc-pentapeptide (lipid intermediate I) to form undecaprenyl-pyrophosphoryl-MurNAc-(pentapeptide)GlcNAc (lipid intermediate II). This Borreliella afzelii (strain PKo) (Borrelia afzelii) protein is UDP-N-acetylglucosamine--N-acetylmuramyl-(pentapeptide) pyrophosphoryl-undecaprenol N-acetylglucosamine transferase.